The following is a 363-amino-acid chain: Mitogen-activated protein kinase 13 (363 aa).

In terms of domain architecture, Protein kinase spans 33–319 (IPPIEPIGRG…VDEALKQPYL (287 aa)). Residues 39–47 (IGRGAYGIV) and Lys-62 each bind ATP. Asp-159 serves as the catalytic Proton acceptor. A Phosphothreonine modification is found at Thr-191. Positions 191–193 (TEY) match the TXY motif. Tyr-193 bears the Phosphotyrosine mark. Thr-196 carries the post-translational modification Phosphothreonine.

This sequence belongs to the protein kinase superfamily. CMGC Ser/Thr protein kinase family. MAP kinase subfamily. As to quaternary structure, interacts with MKK6. In terms of processing, dually phosphorylated on Thr-191 and Tyr-193, which activates the enzyme. As to expression, expressed in roots, stems and flower buds.

It catalyses the reaction L-seryl-[protein] + ATP = O-phospho-L-seryl-[protein] + ADP + H(+). The catalysed reaction is L-threonyl-[protein] + ATP = O-phospho-L-threonyl-[protein] + ADP + H(+). With respect to regulation, activated by threonine and tyrosine phosphorylation. Activated by the MAP kinase kinase MKK6 in vitro. Its function is as follows. MKK6-MPK13 module positively regulates lateral root formation. In Arabidopsis thaliana (Mouse-ear cress), this protein is Mitogen-activated protein kinase 13 (MPK13).